Consider the following 206-residue polypeptide: Thiamine-phosphate synthase (206 aa).

4-amino-2-methyl-5-(diphosphooxymethyl)pyrimidine contacts are provided by residues 39 to 43 and Asn74; that span reads QYREK. Residues Asp75 and Asp94 each contribute to the Mg(2+) site. A 4-amino-2-methyl-5-(diphosphooxymethyl)pyrimidine-binding site is contributed by Ser112. Position 138–140 (138–140) interacts with 2-[(2R,5Z)-2-carboxy-4-methylthiazol-5(2H)-ylidene]ethyl phosphate; that stretch reads TNT. Lys141 is a 4-amino-2-methyl-5-(diphosphooxymethyl)pyrimidine binding site. Residues Gly170 and 190–191 each bind 2-[(2R,5Z)-2-carboxy-4-methylthiazol-5(2H)-ylidene]ethyl phosphate; that span reads IS.

The protein belongs to the thiamine-phosphate synthase family. Mg(2+) serves as cofactor.

It carries out the reaction 2-[(2R,5Z)-2-carboxy-4-methylthiazol-5(2H)-ylidene]ethyl phosphate + 4-amino-2-methyl-5-(diphosphooxymethyl)pyrimidine + 2 H(+) = thiamine phosphate + CO2 + diphosphate. The catalysed reaction is 2-(2-carboxy-4-methylthiazol-5-yl)ethyl phosphate + 4-amino-2-methyl-5-(diphosphooxymethyl)pyrimidine + 2 H(+) = thiamine phosphate + CO2 + diphosphate. It catalyses the reaction 4-methyl-5-(2-phosphooxyethyl)-thiazole + 4-amino-2-methyl-5-(diphosphooxymethyl)pyrimidine + H(+) = thiamine phosphate + diphosphate. The protein operates within cofactor biosynthesis; thiamine diphosphate biosynthesis; thiamine phosphate from 4-amino-2-methyl-5-diphosphomethylpyrimidine and 4-methyl-5-(2-phosphoethyl)-thiazole: step 1/1. Its function is as follows. Condenses 4-methyl-5-(beta-hydroxyethyl)thiazole monophosphate (THZ-P) and 2-methyl-4-amino-5-hydroxymethyl pyrimidine pyrophosphate (HMP-PP) to form thiamine monophosphate (TMP). The sequence is that of Thiamine-phosphate synthase from Oceanobacillus iheyensis (strain DSM 14371 / CIP 107618 / JCM 11309 / KCTC 3954 / HTE831).